A 487-amino-acid polypeptide reads, in one-letter code: Glutamyl-tRNA(Gln) amidotransferase subunit A (487 aa).

Catalysis depends on charge relay system residues Lys79 and Ser154. Ser178 acts as the Acyl-ester intermediate in catalysis.

It belongs to the amidase family. GatA subfamily. As to quaternary structure, heterotrimer of A, B and C subunits.

It catalyses the reaction L-glutamyl-tRNA(Gln) + L-glutamine + ATP + H2O = L-glutaminyl-tRNA(Gln) + L-glutamate + ADP + phosphate + H(+). Its function is as follows. Allows the formation of correctly charged Gln-tRNA(Gln) through the transamidation of misacylated Glu-tRNA(Gln) in organisms which lack glutaminyl-tRNA synthetase. The reaction takes place in the presence of glutamine and ATP through an activated gamma-phospho-Glu-tRNA(Gln). This Moorella thermoacetica (strain ATCC 39073 / JCM 9320) protein is Glutamyl-tRNA(Gln) amidotransferase subunit A.